Reading from the N-terminus, the 355-residue chain is UDP-N-acetylglucosamine--N-acetylmuramyl-(pentapeptide) pyrophosphoryl-undecaprenol N-acetylglucosamine transferase (355 aa).

UDP-N-acetyl-alpha-D-glucosamine is bound by residues Thr-15–Gly-17, Asn-127, Arg-163, Ser-191, Ile-244, Ala-263–Glu-268, and Gln-288.

Belongs to the glycosyltransferase 28 family. MurG subfamily.

It localises to the cell inner membrane. The catalysed reaction is di-trans,octa-cis-undecaprenyl diphospho-N-acetyl-alpha-D-muramoyl-L-alanyl-D-glutamyl-meso-2,6-diaminopimeloyl-D-alanyl-D-alanine + UDP-N-acetyl-alpha-D-glucosamine = di-trans,octa-cis-undecaprenyl diphospho-[N-acetyl-alpha-D-glucosaminyl-(1-&gt;4)]-N-acetyl-alpha-D-muramoyl-L-alanyl-D-glutamyl-meso-2,6-diaminopimeloyl-D-alanyl-D-alanine + UDP + H(+). It functions in the pathway cell wall biogenesis; peptidoglycan biosynthesis. In terms of biological role, cell wall formation. Catalyzes the transfer of a GlcNAc subunit on undecaprenyl-pyrophosphoryl-MurNAc-pentapeptide (lipid intermediate I) to form undecaprenyl-pyrophosphoryl-MurNAc-(pentapeptide)GlcNAc (lipid intermediate II). This Photorhabdus laumondii subsp. laumondii (strain DSM 15139 / CIP 105565 / TT01) (Photorhabdus luminescens subsp. laumondii) protein is UDP-N-acetylglucosamine--N-acetylmuramyl-(pentapeptide) pyrophosphoryl-undecaprenol N-acetylglucosamine transferase.